We begin with the raw amino-acid sequence, 259 residues long: UPF0246 protein PLES_14941 (259 aa).

The protein belongs to the UPF0246 family.

The protein is UPF0246 protein PLES_14941 of Pseudomonas aeruginosa (strain LESB58).